The following is a 372-amino-acid chain: Dual-specificity RNA methyltransferase RlmN (372 aa).

Catalysis depends on E94, which acts as the Proton acceptor. The Radical SAM core domain occupies 100–339 (DGDRATLCVS…VTIRKTRGDD (240 aa)). A disulfide bond links C107 and C344. Residues C114, C118, and C121 each contribute to the [4Fe-4S] cluster site. Residues 168–169 (GE), S200, 222–224 (SLH), and N301 contribute to the S-adenosyl-L-methionine site. C344 functions as the S-methylcysteine intermediate in the catalytic mechanism.

This sequence belongs to the radical SAM superfamily. RlmN family. The cofactor is [4Fe-4S] cluster.

Its subcellular location is the cytoplasm. It catalyses the reaction adenosine(2503) in 23S rRNA + 2 reduced [2Fe-2S]-[ferredoxin] + 2 S-adenosyl-L-methionine = 2-methyladenosine(2503) in 23S rRNA + 5'-deoxyadenosine + L-methionine + 2 oxidized [2Fe-2S]-[ferredoxin] + S-adenosyl-L-homocysteine. The catalysed reaction is adenosine(37) in tRNA + 2 reduced [2Fe-2S]-[ferredoxin] + 2 S-adenosyl-L-methionine = 2-methyladenosine(37) in tRNA + 5'-deoxyadenosine + L-methionine + 2 oxidized [2Fe-2S]-[ferredoxin] + S-adenosyl-L-homocysteine. Functionally, specifically methylates position 2 of adenine 2503 in 23S rRNA and position 2 of adenine 37 in tRNAs. m2A2503 modification seems to play a crucial role in the proofreading step occurring at the peptidyl transferase center and thus would serve to optimize ribosomal fidelity. In Aliivibrio fischeri (strain MJ11) (Vibrio fischeri), this protein is Dual-specificity RNA methyltransferase RlmN.